The primary structure comprises 184 residues: Fe/S biogenesis protein NfuA (184 aa).

2 residues coordinate [4Fe-4S] cluster: cysteine 142 and cysteine 145.

It belongs to the NfuA family. As to quaternary structure, homodimer. [4Fe-4S] cluster serves as cofactor.

Involved in iron-sulfur cluster biogenesis. Binds a 4Fe-4S cluster, can transfer this cluster to apoproteins, and thereby intervenes in the maturation of Fe/S proteins. Could also act as a scaffold/chaperone for damaged Fe/S proteins. This chain is Fe/S biogenesis protein NfuA, found in Wigglesworthia glossinidia brevipalpis.